Here is a 243-residue protein sequence, read N- to C-terminus: Exosome complex component Rrp41 (243 aa).

This sequence belongs to the RNase PH family. Rrp41 subfamily. In terms of assembly, component of the archaeal exosome complex. Forms a hexameric ring-like arrangement composed of 3 Rrp41-Rrp42 heterodimers. The hexameric ring associates with a trimer of Rrp4 and/or Csl4 subunits.

It is found in the cytoplasm. Catalytic component of the exosome, which is a complex involved in RNA degradation. Has 3'-&gt;5' exoribonuclease activity. Can also synthesize heteromeric RNA-tails. This Sulfurisphaera tokodaii (strain DSM 16993 / JCM 10545 / NBRC 100140 / 7) (Sulfolobus tokodaii) protein is Exosome complex component Rrp41.